The chain runs to 445 residues: UPF0210 protein SP_0239 (445 aa).

The protein belongs to the UPF0210 family. As to quaternary structure, homodimer.

The polypeptide is UPF0210 protein SP_0239 (Streptococcus pneumoniae serotype 4 (strain ATCC BAA-334 / TIGR4)).